The primary structure comprises 343 residues: ATP-dependent 6-phosphofructokinase (343 aa).

ATP contacts are provided by residues Gly-10 and 103–106 (GEGT). Residue Glu-104 participates in Mg(2+) binding. Substrate is bound by residues 126-128 (TID), Arg-163, 170-172 (MGR), Glu-223, Arg-267, and 273-276 (HVQR). The active-site Proton acceptor is Asp-128.

The protein belongs to the phosphofructokinase type A (PFKA) family. Mixed-substrate PFK group III subfamily. In terms of assembly, homodimer or homotetramer. It depends on Mg(2+) as a cofactor.

Its subcellular location is the cytoplasm. It catalyses the reaction beta-D-fructose 6-phosphate + ATP = beta-D-fructose 1,6-bisphosphate + ADP + H(+). It functions in the pathway carbohydrate degradation; glycolysis; D-glyceraldehyde 3-phosphate and glycerone phosphate from D-glucose: step 3/4. Functionally, catalyzes the phosphorylation of D-fructose 6-phosphate to fructose 1,6-bisphosphate by ATP, the first committing step of glycolysis. The sequence is that of ATP-dependent 6-phosphofructokinase from Mycobacterium leprae (strain TN).